A 448-amino-acid polypeptide reads, in one-letter code: Trigger factor (448 aa).

The region spanning 162-243 (DDFAIIDIEA…VQQTKERKLP (82 aa)) is the PPIase FKBP-type domain. A disordered region spans residues 426–448 (DEGKAVDPSEYFGEEEESAEESE). Positions 437–448 (FGEEEESAEESE) are enriched in acidic residues.

Belongs to the FKBP-type PPIase family. Tig subfamily.

It is found in the cytoplasm. It catalyses the reaction [protein]-peptidylproline (omega=180) = [protein]-peptidylproline (omega=0). In terms of biological role, involved in protein export. Acts as a chaperone by maintaining the newly synthesized protein in an open conformation. Functions as a peptidyl-prolyl cis-trans isomerase. The protein is Trigger factor of Corynebacterium diphtheriae (strain ATCC 700971 / NCTC 13129 / Biotype gravis).